The primary structure comprises 428 residues: 3-phosphoshikimate 1-carboxyvinyltransferase (428 aa).

Lysine 19, serine 20, and arginine 24 together coordinate 3-phosphoshikimate. Lysine 19 serves as a coordination point for phosphoenolpyruvate. Residues glycine 91 and arginine 119 each contribute to the phosphoenolpyruvate site. 3-phosphoshikimate contacts are provided by serine 164, glutamine 166, aspartate 312, and lysine 339. Glutamine 166 lines the phosphoenolpyruvate pocket. Aspartate 312 serves as the catalytic Proton acceptor. Arginine 343 and arginine 386 together coordinate phosphoenolpyruvate.

It belongs to the EPSP synthase family. In terms of assembly, monomer.

Its subcellular location is the cytoplasm. The catalysed reaction is 3-phosphoshikimate + phosphoenolpyruvate = 5-O-(1-carboxyvinyl)-3-phosphoshikimate + phosphate. The protein operates within metabolic intermediate biosynthesis; chorismate biosynthesis; chorismate from D-erythrose 4-phosphate and phosphoenolpyruvate: step 6/7. Functionally, catalyzes the transfer of the enolpyruvyl moiety of phosphoenolpyruvate (PEP) to the 5-hydroxyl of shikimate-3-phosphate (S3P) to produce enolpyruvyl shikimate-3-phosphate and inorganic phosphate. This Bacillus subtilis (strain 168) protein is 3-phosphoshikimate 1-carboxyvinyltransferase.